A 203-amino-acid chain; its full sequence is IQ domain-containing protein F3 (203 aa).

A compositionally biased stretch (basic and acidic residues) spans 1 to 12 (MELDQDKKKETP). The interval 1–111 (MELDQDKKKE…CETQEADRSE (111 aa)) is disordered. The stretch at 13 to 82 (EETENVNEVQ…EADKAILERS (70 aa)) forms a coiled coil. The span at 29-38 (DEETEAEAEE) shows a compositional bias: acidic residues. The span at 39 to 51 (ADKAILERSDSVK) shows a compositional bias: basic and acidic residues. The segment covering 64-73 (DEETEAEAEE) has biased composition (acidic residues). Composition is skewed to basic and acidic residues over residues 74–86 (ADKAILERSDSVK) and 96–111 (QIQEEKCETQEADRSE). Positions 129–158 (VMLAGVKIQAWWRGTLVRRTLLLAALNAWT) constitute an IQ domain.

This is IQ domain-containing protein F3 (Iqcf3) from Mus musculus (Mouse).